Here is a 377-residue protein sequence, read N- to C-terminus: Queuine tRNA-ribosyltransferase (377 aa).

Residue Asp89 is the Proton acceptor of the active site. Substrate contacts are provided by residues 89–93, Asp143, Gln188, and Gly215; that span reads DSGGF. The interval 246–252 is RNA binding; it reads GVGKPED. Catalysis depends on Asp265, which acts as the Nucleophile. The segment at 270 to 274 is RNA binding; important for wobble base 34 recognition; the sequence is TRNAR. Zn(2+)-binding residues include Cys303, Cys305, Cys308, and His334.

It belongs to the queuine tRNA-ribosyltransferase family. As to quaternary structure, homodimer. Within each dimer, one monomer is responsible for RNA recognition and catalysis, while the other monomer binds to the replacement base PreQ1. It depends on Zn(2+) as a cofactor.

The catalysed reaction is 7-aminomethyl-7-carbaguanine + guanosine(34) in tRNA = 7-aminomethyl-7-carbaguanosine(34) in tRNA + guanine. It participates in tRNA modification; tRNA-queuosine biosynthesis. Catalyzes the base-exchange of a guanine (G) residue with the queuine precursor 7-aminomethyl-7-deazaguanine (PreQ1) at position 34 (anticodon wobble position) in tRNAs with GU(N) anticodons (tRNA-Asp, -Asn, -His and -Tyr). Catalysis occurs through a double-displacement mechanism. The nucleophile active site attacks the C1' of nucleotide 34 to detach the guanine base from the RNA, forming a covalent enzyme-RNA intermediate. The proton acceptor active site deprotonates the incoming PreQ1, allowing a nucleophilic attack on the C1' of the ribose to form the product. After dissociation, two additional enzymatic reactions on the tRNA convert PreQ1 to queuine (Q), resulting in the hypermodified nucleoside queuosine (7-(((4,5-cis-dihydroxy-2-cyclopenten-1-yl)amino)methyl)-7-deazaguanosine). The protein is Queuine tRNA-ribosyltransferase of Acinetobacter baumannii (strain SDF).